The chain runs to 420 residues: Amino acid decarboxylase lolD1 (420 aa).

Lys62 carries the post-translational modification N6-(pyridoxal phosphate)lysine. Pyridoxal 5'-phosphate-binding positions include Ser194, Gly231, and 266–269 (EPGT). 315–316 (IV) provides a ligand contact to substrate. Cys351 acts as the Proton donor; shared with dimeric partner in catalysis. Cys351 carries the S-nitrosocysteine modification. Asp352 provides a ligand contact to substrate. Tyr381 is a binding site for pyridoxal 5'-phosphate.

It belongs to the Orn/Lys/Arg decarboxylase class-II family. As to quaternary structure, homodimer. Pyridoxal 5'-phosphate serves as cofactor.

It functions in the pathway alkaloid biosynthesis. Functionally, amino acid decarboxylase; part of the gene cluster that mediates the biosynthesis of loline alkaloids, potent insecticidal agents composed of a pyrrolizidine ring system and an uncommon ether bridge linking carbons 2 and 7. Lolines are structurally differentiated by the various modifications of the L-amino group and include norloline, loline, N-methylloline, N-acetylloline, N-acetylnorloline, and N-formylloline. The first committed step is the condensation of O-acetyl-L-homoserine (derived from L-aspartic acid) and L-proline, probably catalyzed by the gamma-type pyridoxal 5'-phosphate(PLP)-dependent enzyme lolC, to give the diamino diacid, NACPP. Ensuing cyclization, decarboxylation, and acetylation steps yield 1-exo-acetamidopyrrolizidine (AcAP). LolO is required for installation of the ether bridge upon the pathway intermediate, 1-exo-acetamidopyrrolizidine (AcAP). In sequential 2-oxoglutarate- and O(2)-consuming steps, lolO removes hydrogens from C2 and C7 of AcAP to form both carbon-oxygen bonds in N-acetylnorloline (NANL), the precursor to all other lolines. The enzymes lolD, lolE, lolF and lolT have also been proposed to be involved in the ether-bridge installation. Further processing of the exocyclic moiety of NANL by fungal N-acetamidase (LolN), methyltransferase (LolM), and cytochrome P450 (LolP) enzymes, with occasional involvement of a plant acetyltransferase, generates the other known lolines. LolN transforms NANL to norlonine which is monomethylated and dimethylated to respectively lonine and N-methyllonine (NML) by lolM. LolP catalyzes hydroxylation of the methyl group in N-methylloline (NML) and further oxygenation to N-formylloline (NFL). A plant acetyltransferase is responsible for the acetylation of loline to form N-acetylloline (NAL). LolA might interact with aspartate kinase to prevent feedback inhibition of its activity by these end products and thereby promote production of L-homoserine from L-aspartate. This chain is Amino acid decarboxylase lolD1, found in Epichloe uncinata (Endophyte fungus).